The following is a 599-amino-acid chain: ATP-binding cassette sub-family E member 1 (599 aa).

2 consecutive 4Fe-4S ferredoxin-type domains span residues 7 to 37 and 46 to 75; these read RIAI…MGKL and KIAW…IVNL. Residue lysine 20 forms a Glycyl lysine isopeptide (Lys-Gly) (interchain with G-Cter in ubiquitin) linkage. ABC transporter domains are found at residues 79–315 and 342–562; these read LEKE…FLDG and VKKM…LSQL. Residues 110–117 and 379–386 each bind ATP; these read GTNGIGKS and GENGTGKT. Position 417 is a phosphoserine (serine 417). Position 550 is a phosphothreonine (threonine 550).

It belongs to the ABC transporter superfamily. ABCE family. As to quaternary structure, (Microbial infection) Interacts with Chandipura virus matrix protein. In terms of assembly, interacts with PINK1. Interacts with CNOT4. Interacts with PELO. Probably heterodimerizes with RNASEL; this interaction inhibits RNASEL. (Microbial infection) Interacts with HIV-1 proteins Vif and Gag. As to quaternary structure, (Microbial infection) Interacts with HIV-2 protein Gag. Ubiquitinated by CNOT4. Ubiquitination mediates the recruitment of autophagy receptors to the mitochondrial outer membrane and initiates mitophagy.

The protein resides in the cytoplasm. The protein localises to the mitochondrion. It carries out the reaction GTP + H2O = GDP + phosphate + H(+). It catalyses the reaction ATP + H2O = ADP + phosphate + H(+). The catalysed reaction is CTP + H2O = CDP + phosphate + H(+). The enzyme catalyses UTP + H2O = UDP + phosphate + H(+). In terms of biological role, nucleoside-triphosphatase (NTPase) involved in ribosome recycling by mediating ribosome disassembly. Able to hydrolyze ATP, GTP, UTP and CTP. Splits ribosomes into free 60S subunits and tRNA- and mRNA-bound 40S subunits. Acts either after canonical termination facilitated by release factors (ETF1/eRF1) or after recognition of stalled and vacant ribosomes by mRNA surveillance factors (PELO/Pelota). Involved in the No-Go Decay (NGD) pathway: recruited to stalled ribosomes by the Pelota-HBS1L complex, and drives the disassembly of stalled ribosomes, followed by degradation of damaged mRNAs as part of the NGD pathway. Also plays a role in quality control of translation of mitochondrial outer membrane-localized mRNA. As part of the PINK1-regulated signaling, ubiquitinated by CNOT4 upon mitochondria damage; this modification generates polyubiquitin signals that recruit autophagy receptors to the mitochondrial outer membrane and initiate mitophagy. RNASEL-specific protein inhibitor which antagonizes the binding of 2-5A (5'-phosphorylated 2',5'-linked oligoadenylates) to RNASEL. Negative regulator of the anti-viral effect of the interferon-regulated 2-5A/RNASEL pathway. Its function is as follows. (Microbial infection) May act as a chaperone for post-translational events during HIV-1 capsid assembly. Functionally, (Microbial infection) Plays a role in the down-regulation of the 2-5A/RNASEL pathway during encephalomyocarditis virus (EMCV) and HIV-1 infections. This is ATP-binding cassette sub-family E member 1 (ABCE1) from Homo sapiens (Human).